We begin with the raw amino-acid sequence, 370 residues long: Ubiquinone biosynthesis O-methyltransferase, mitochondrial (370 aa).

The N-terminal 86 residues, 1 to 86, are a transit peptide targeting the mitochondrion; the sequence is MWGGSKLSSS…SYRLPWTRPY (86 aa). Arginine 125 serves as a coordination point for S-adenosyl-L-methionine. 2 positions are modified to N6-acetyllysine: lysine 144 and lysine 150. 2 residues coordinate S-adenosyl-L-methionine: glycine 155 and aspartate 176. An N6-acetyllysine modification is found at lysine 197. An S-adenosyl-L-methionine-binding site is contributed by serine 223. Glutamate 224, glutamate 227, and histidine 228 together coordinate Mg(2+).

Belongs to the class I-like SAM-binding methyltransferase superfamily. UbiG/COQ3 family. Component of a multi-subunit COQ enzyme complex, composed of at least COQ3, COQ4, COQ5, COQ6, COQ7 and COQ9. Requires Mg(2+) as cofactor.

It localises to the mitochondrion inner membrane. The catalysed reaction is 3,4-dihydroxy-5-(all-trans-decaprenyl)benzoate + S-adenosyl-L-methionine = 4-hydroxy-3-methoxy-5-(all-trans-decaprenyl)benzoate + S-adenosyl-L-homocysteine + H(+). It carries out the reaction a 3-demethylubiquinone + S-adenosyl-L-methionine = a ubiquinone + S-adenosyl-L-homocysteine. It catalyses the reaction 3-demethylubiquinol-10 + S-adenosyl-L-methionine = ubiquinol-10 + S-adenosyl-L-homocysteine + H(+). Its pathway is cofactor biosynthesis; ubiquinone biosynthesis. Functionally, O-methyltransferase required for two non-consecutive steps during ubiquinone biosynthesis. Catalyzes the 2 O-methylation of 3,4-dihydroxy-5-(all-trans-decaprenyl)benzoic acid into 4-hydroxy-3-methoxy-5-(all-trans-decaprenyl)benzoic acid. Also catalyzes the last step of ubiquinone biosynthesis by mediating methylation of 3-demethylubiquinone into ubiquinone. Also able to mediate the methylation of 3-demethylubiquinol-10 into ubiquinol-10. This is Ubiquinone biosynthesis O-methyltransferase, mitochondrial from Bos taurus (Bovine).